The chain runs to 227 residues: Claudin-15 (227 aa).

A topological domain (cytoplasmic) is located at residue Met1. The chain crosses the membrane as a helical span at residues 2–24; the sequence is SIAVETFGFFMSALGLLMLGVTL. Topologically, residues 25–74 are extracellular; sequence PNSYWRVSTVHGNVITTNTIFENLWYSCATDSLGVSNCWDFPSMLALSGY. Cys52 and Cys62 are oxidised to a cystine. The chain crosses the membrane as a helical span at residues 75–99; sequence VQGCRALMITAILLGFLGLFLGMVG. Residues 100-115 are Cytoplasmic-facing; that stretch reads LRCTNVGNIDLSRKAK. Phosphoserine is present on Ser111. Residues 116 to 140 form a helical membrane-spanning segment; sequence LLAIAGAFHILAGACGMVAISWYAV. The Extracellular portion of the chain corresponds to 141-159; the sequence is NITTDFFNPLYVGTKYELG. Residues 146–147 form an important for the formation of tight-junction strand-like structures region; the sequence is FF. Residues 160–182 form a helical membrane-spanning segment; sequence SALYLGWSASLLSILGGICVFST. The Cytoplasmic portion of the chain corresponds to 183 to 227; the sequence is CCCDSKEDPATRVGLPYKPSTVVTARATSDESDVSFGKYGKNAYV. A phosphoserine mark is found at Ser211, Ser214, and Ser217.

The protein belongs to the claudin family. As to quaternary structure, can form homo- and heteropolymeric tight junction strands. In terms of processing, palmitoylated. In terms of tissue distribution, detected in kidney, jejunum and colon (at protein level).

It is found in the cell junction. The protein resides in the tight junction. The protein localises to the cell membrane. The catalysed reaction is Na(+)(in) = Na(+)(out). It catalyses the reaction K(+)(in) = K(+)(out). The enzyme catalyses Cs(+)(in) = Cs(+)(out). It carries out the reaction Rb(+)(in) = Rb(+)(out). The catalysed reaction is Li(+)(in) = Li(+)(out). It catalyses the reaction NH4(+)(in) = NH4(+)(out). The enzyme catalyses methylamine(out) = methylamine(in). It carries out the reaction H2O(in) = H2O(out). In terms of biological role, forms paracellular channels: polymerizes in tight junction strands with cation- and water-selective channels through the strands, conveying epithelial permeability in a process known as paracellular tight junction permeability. In intestinal epithelium, allows for sodium and water fluxes from the peritoneal side to the lumen of the intestine to regulate nutrient absorption and intestinal morphogenesis. The polypeptide is Claudin-15 (Rattus norvegicus (Rat)).